A 215-amino-acid chain; its full sequence is 2-phospho-L-lactate guanylyltransferase (215 aa).

Belongs to the CofC family. As to quaternary structure, homodimer.

The catalysed reaction is (2S)-2-phospholactate + GTP + H(+) = (2S)-lactyl-2-diphospho-5'-guanosine + diphosphate. It functions in the pathway cofactor biosynthesis; coenzyme F420 biosynthesis. Guanylyltransferase that catalyzes the activation of (2S)-2-phospholactate (2-PL) as (2S)-lactyl-2-diphospho-5'-guanosine, via the condensation of 2-PL with GTP. It is involved in the biosynthesis of coenzyme F420, a hydride carrier cofactor. The protein is 2-phospho-L-lactate guanylyltransferase of Methanococcoides burtonii (strain DSM 6242 / NBRC 107633 / OCM 468 / ACE-M).